The chain runs to 202 residues: Peptide deformylase (202 aa).

The segment at 1-24 is disordered; sequence MAGSFAQLAKNAEKKKPSISVSKE. Positions 121 and 163 each coordinate Fe cation. Residue Glu164 is part of the active site. Residue His167 coordinates Fe cation.

The protein belongs to the polypeptide deformylase family. Fe(2+) serves as cofactor.

The enzyme catalyses N-terminal N-formyl-L-methionyl-[peptide] + H2O = N-terminal L-methionyl-[peptide] + formate. Removes the formyl group from the N-terminal Met of newly synthesized proteins. Requires at least a dipeptide for an efficient rate of reaction. N-terminal L-methionine is a prerequisite for activity but the enzyme has broad specificity at other positions. The polypeptide is Peptide deformylase (Prochlorococcus marinus (strain NATL2A)).